Consider the following 292-residue polypeptide: RNA 5'-monophosphate methyltransferase (292 aa).

The tract at residues 1 to 20 (MAVPTELHGGSVKETAAEKE) is disordered. S-adenosyl-L-methionine is bound by residues arginine 46, asparagine 76, aspartate 110, 135 to 136 (DF), and methionine 164. Residues 53–274 (ELLRQLFPES…KQTIETHPIP (222 aa)) form the Bin3-type SAM domain.

This sequence belongs to the methyltransferase superfamily. As to quaternary structure, interacts with DICER1; the interaction may be mediated by RNA.

The protein localises to the cytoplasm. It catalyses the reaction a 5'-end 5'-phospho-ribonucleoside-RNA + S-adenosyl-L-methionine = a 5'-end (5'-methylphospho)-ribonucleoside-RNA + S-adenosyl-L-homocysteine. The catalysed reaction is a 5'-end 5'-phospho-ribonucleoside-RNA + 2 S-adenosyl-L-methionine = a 5'-end (5'-bismethylphospho)-ribonucleoside-RNA + 2 S-adenosyl-L-homocysteine. Its function is as follows. O-methyltransferase that specifically monomethylates 5'-monophosphate of cytoplasmic histidyl tRNA (tRNA(His)), acting as a capping enzyme by protecting tRNA(His) from cleavage by DICER1. Also able, with less efficiently, to methylate the 5' monophosphate of a subset of pre-miRNAs, acting as a negative regulator of miRNA processing. The 5' monophosphate of pre-miRNAs is recognized by DICER1 and is required for pre-miRNAs processing: methylation at this position reduces the processing of pre-miRNAs by DICER1. Was also reported to mediate dimethylation of pre-miR-145; however dimethylation cannot be reproduced by another group which observes a monomethylation of pre-miR-145. The chain is RNA 5'-monophosphate methyltransferase (BCDIN3D) from Pongo abelii (Sumatran orangutan).